Reading from the N-terminus, the 283-residue chain is Phospholipase C (283 aa).

Residues 1–24 form the signal peptide; sequence MKKKVLALAAAITVVAPLQSVAFA. A propeptide spanning residues 25–38 is cleaved from the precursor; the sequence is HENDGGSKIKIVHR. Zn(2+) is bound by residues Trp-39, His-52, Asp-93, His-107, His-156, Asp-160, His-166, His-180, and Glu-184. Residues 39–283 form the Zn-dependent PLC domain; it reads WSAEDKHKEG…QLWFDTYGDR (245 aa).

The protein belongs to the bacterial zinc-metallophospholipase C family. Monomer. It depends on Zn(2+) as a cofactor.

It catalyses the reaction a 1,2-diacyl-sn-glycero-3-phosphocholine + H2O = phosphocholine + a 1,2-diacyl-sn-glycerol + H(+). Its function is as follows. Required, with sphingomyelinase, to effect target cell lysis (hemolysis). This chain is Phospholipase C (plc), found in Bacillus cereus.